The primary structure comprises 262 residues: 3-methyl-2-oxobutanoate hydroxymethyltransferase (262 aa).

Residues D42 and D81 each coordinate Mg(2+). 3-methyl-2-oxobutanoate contacts are provided by residues 42–43 (DS), D81, and K110. E112 lines the Mg(2+) pocket. The active-site Proton acceptor is the E179.

The protein belongs to the PanB family. As to quaternary structure, homodecamer; pentamer of dimers. It depends on Mg(2+) as a cofactor.

Its subcellular location is the cytoplasm. It catalyses the reaction 3-methyl-2-oxobutanoate + (6R)-5,10-methylene-5,6,7,8-tetrahydrofolate + H2O = 2-dehydropantoate + (6S)-5,6,7,8-tetrahydrofolate. Its pathway is cofactor biosynthesis; (R)-pantothenate biosynthesis; (R)-pantoate from 3-methyl-2-oxobutanoate: step 1/2. Catalyzes the reversible reaction in which hydroxymethyl group from 5,10-methylenetetrahydrofolate is transferred onto alpha-ketoisovalerate to form ketopantoate. This is 3-methyl-2-oxobutanoate hydroxymethyltransferase from Methylobacillus flagellatus (strain ATCC 51484 / DSM 6875 / VKM B-1610 / KT).